Reading from the N-terminus, the 180-residue chain is MVQRLDSFYQEQSIPQLIKEFHYKNKHQVPKLDKIVINRGLGDASQNAKVLESCSKEQSIITRQQGVVTRSKKAIASFKLREKMPVGLVVTLRGDKMYAFLDRLINLALPRIRDFQGVSRKSFDGRGNYSLGLEEQLMFPEIDYDKIDQIRGMDVSIVTTAKTDKEAMALFKTFGMPFKN.

It belongs to the universal ribosomal protein uL5 family. Part of the 50S ribosomal subunit; contacts the 5S rRNA.

The protein resides in the plastid. It is found in the chloroplast. Functionally, binds 5S rRNA, forms part of the central protuberance of the 50S subunit. This Chlorella vulgaris (Green alga) protein is Large ribosomal subunit protein uL5c (rpl5).